The sequence spans 65 residues: Small ribosomal subunit protein bS21B (65 aa).

It belongs to the bacterial ribosomal protein bS21 family.

The sequence is that of Small ribosomal subunit protein bS21B from Francisella tularensis subsp. holarctica (strain LVS).